The sequence spans 257 residues: Hydroxyacylglutathione hydrolase (257 aa).

Zn(2+) is bound by residues His54, His56, Asp58, His59, His113, Asp137, and His175.

It belongs to the metallo-beta-lactamase superfamily. Glyoxalase II family. Monomer. Zn(2+) serves as cofactor.

It catalyses the reaction an S-(2-hydroxyacyl)glutathione + H2O = a 2-hydroxy carboxylate + glutathione + H(+). It participates in secondary metabolite metabolism; methylglyoxal degradation; (R)-lactate from methylglyoxal: step 2/2. In terms of biological role, thiolesterase that catalyzes the hydrolysis of S-D-lactoyl-glutathione to form glutathione and D-lactic acid. The chain is Hydroxyacylglutathione hydrolase from Crocosphaera subtropica (strain ATCC 51142 / BH68) (Cyanothece sp. (strain ATCC 51142)).